Reading from the N-terminus, the 213-residue chain is MEEQGRCACRLEDRPHYEEMVLETMLYSARLKERVARENSAVIVAMSRLMAETFEGGGRVLFCGNGGSAADAQHLATELTIRYRSSVQRPALAAIALSSDSMALTAGANDLGYDAVFARLVEAYGREGDLLVGISTSGNSQSVANAFMAAQERGLKCIALLGGDGGAMKGKADLEIVVPHTGSADRVQECHIAIGHVIIDLVERMLGYCTSSR.

The 159-residue stretch at 50 to 208 (MAETFEGGGR…IDLVERMLGY (159 aa)) folds into the SIS domain. Residue 65–67 (NGG) coordinates substrate. Zn(2+) contacts are provided by His-74 and Glu-78. Substrate contacts are provided by residues Glu-78, 109 to 110 (ND), 135 to 137 (STS), Ser-140, and Gln-188. Zn(2+) is bound by residues Gln-188 and His-196.

This sequence belongs to the SIS family. GmhA subfamily. Requires Zn(2+) as cofactor.

The protein resides in the cytoplasm. It carries out the reaction 2 D-sedoheptulose 7-phosphate = D-glycero-alpha-D-manno-heptose 7-phosphate + D-glycero-beta-D-manno-heptose 7-phosphate. It participates in carbohydrate biosynthesis; D-glycero-D-manno-heptose 7-phosphate biosynthesis; D-glycero-alpha-D-manno-heptose 7-phosphate and D-glycero-beta-D-manno-heptose 7-phosphate from sedoheptulose 7-phosphate: step 1/1. In terms of biological role, catalyzes the isomerization of sedoheptulose 7-phosphate in D-glycero-D-manno-heptose 7-phosphate. This Chlorobium phaeovibrioides (strain DSM 265 / 1930) (Prosthecochloris vibrioformis (strain DSM 265)) protein is Phosphoheptose isomerase.